The sequence spans 182 residues: Adenine phosphoribosyltransferase (182 aa).

This sequence belongs to the purine/pyrimidine phosphoribosyltransferase family. As to quaternary structure, homodimer.

The protein resides in the cytoplasm. It catalyses the reaction AMP + diphosphate = 5-phospho-alpha-D-ribose 1-diphosphate + adenine. It participates in purine metabolism; AMP biosynthesis via salvage pathway; AMP from adenine: step 1/1. Its function is as follows. Catalyzes a salvage reaction resulting in the formation of AMP, that is energically less costly than de novo synthesis. The polypeptide is Adenine phosphoribosyltransferase (Campylobacter jejuni subsp. jejuni serotype O:2 (strain ATCC 700819 / NCTC 11168)).